The chain runs to 514 residues: UDP-N-acetylmuramyl-tripeptide synthetase (514 aa).

Positions 44 and 46 each coordinate UDP-N-acetyl-alpha-D-muramoyl-L-alanyl-D-glutamate. 129 to 135 (GTNGKTS) contributes to the ATP binding site. UDP-N-acetyl-alpha-D-muramoyl-L-alanyl-D-glutamate-binding positions include 171–172 (TT), serine 198, and arginine 206. N6-carboxylysine is present on lysine 238.

The protein belongs to the MurCDEF family. MurE subfamily. Carboxylation is probably crucial for Mg(2+) binding and, consequently, for the gamma-phosphate positioning of ATP.

The protein localises to the cytoplasm. The protein operates within cell wall biogenesis; peptidoglycan biosynthesis. Its function is as follows. Catalyzes the addition of an amino acid to the nucleotide precursor UDP-N-acetylmuramoyl-L-alanyl-D-glutamate (UMAG) in the biosynthesis of bacterial cell-wall peptidoglycan. The polypeptide is UDP-N-acetylmuramyl-tripeptide synthetase (Leifsonia xyli subsp. xyli (strain CTCB07)).